The primary structure comprises 413 residues: Putative competence-damage inducible protein (413 aa).

It belongs to the CinA family.

The protein is Putative competence-damage inducible protein of Halothermothrix orenii (strain H 168 / OCM 544 / DSM 9562).